The sequence spans 329 residues: Small ribosomal subunit protein RACK1 (329 aa).

7 WD repeats span residues 19 to 59, 68 to 107, 110 to 149, 154 to 193, 196 to 235, 237 to 275, and 295 to 328; these read GHNG…ATSP, GHSH…STRL, GHTQ…KFTL, AHQD…CNHT, DHTG…PLYK, EARN…VLAE, and PKAP…KSSS.

It belongs to the WD repeat G protein beta family. Ribosomal protein RACK1 subfamily.

This Dictyostelium discoideum (Social amoeba) protein is Small ribosomal subunit protein RACK1 (gpbB).